Here is a 263-residue protein sequence, read N- to C-terminus: Phosphatidylglycerol--prolipoprotein diacylglyceryl transferase (263 aa).

Transmembrane regions (helical) follow at residues 6 to 26, 50 to 70, 85 to 105, and 112 to 132; these read VIFS…VLGI, LLTA…VLIY, TWEG…AVII, and IPIF…LFLG. Residue Arg-133 participates in a 1,2-diacyl-sn-glycero-3-phospho-(1'-sn-glycerol) binding. The next 3 helical transmembrane spans lie at 169–189, 197–217, and 233–253; these read LYEA…LFFL, GALT…VEFF, and MGQL…LGAL.

The protein belongs to the Lgt family.

Its subcellular location is the cell membrane. The enzyme catalyses L-cysteinyl-[prolipoprotein] + a 1,2-diacyl-sn-glycero-3-phospho-(1'-sn-glycerol) = an S-1,2-diacyl-sn-glyceryl-L-cysteinyl-[prolipoprotein] + sn-glycerol 1-phosphate + H(+). Its pathway is protein modification; lipoprotein biosynthesis (diacylglyceryl transfer). Catalyzes the transfer of the diacylglyceryl group from phosphatidylglycerol to the sulfhydryl group of the N-terminal cysteine of a prolipoprotein, the first step in the formation of mature lipoproteins. This Wolbachia sp. subsp. Drosophila simulans (strain wRi) protein is Phosphatidylglycerol--prolipoprotein diacylglyceryl transferase.